The sequence spans 723 residues: Catalase-peroxidase (723 aa).

The tryptophyl-tyrosyl-methioninium (Trp-Tyr) (with M-252) cross-link spans 98–226; the sequence is WHAAGSYRAA…LAAVQMGLIY (129 aa). The active-site Proton acceptor is the His99. Positions 226 to 252 form a cross-link, tryptophyl-tyrosyl-methioninium (Tyr-Met) (with W-98); it reads YVNPEGVNGKPDPLKTAAQVRETFARM. His267 contributes to the heme b binding site. The segment at 267–286 is disordered; that stretch reads HTVGKTHGNGRAENLGPSPE.

This sequence belongs to the peroxidase family. Peroxidase/catalase subfamily. As to quaternary structure, homodimer or homotetramer. Heme b serves as cofactor. Formation of the three residue Trp-Tyr-Met cross-link is important for the catalase, but not the peroxidase activity of the enzyme.

It carries out the reaction H2O2 + AH2 = A + 2 H2O. The catalysed reaction is 2 H2O2 = O2 + 2 H2O. Functionally, bifunctional enzyme with both catalase and broad-spectrum peroxidase activity. The protein is Catalase-peroxidase of Thioalkalivibrio sulfidiphilus (strain HL-EbGR7).